Here is a 207-residue protein sequence, read N- to C-terminus: Histidine biosynthesis bifunctional protein HisIE (207 aa).

Residues methionine 1–phenylalanine 117 form a phosphoribosyl-AMP cyclohydrolase region. Positions leucine 118 to lysine 207 are phosphoribosyl-ATP pyrophosphohydrolase.

It in the N-terminal section; belongs to the PRA-CH family. In the C-terminal section; belongs to the PRA-PH family.

The protein resides in the cytoplasm. The catalysed reaction is 1-(5-phospho-beta-D-ribosyl)-ATP + H2O = 1-(5-phospho-beta-D-ribosyl)-5'-AMP + diphosphate + H(+). It catalyses the reaction 1-(5-phospho-beta-D-ribosyl)-5'-AMP + H2O = 1-(5-phospho-beta-D-ribosyl)-5-[(5-phospho-beta-D-ribosylamino)methylideneamino]imidazole-4-carboxamide. It functions in the pathway amino-acid biosynthesis; L-histidine biosynthesis; L-histidine from 5-phospho-alpha-D-ribose 1-diphosphate: step 2/9. It participates in amino-acid biosynthesis; L-histidine biosynthesis; L-histidine from 5-phospho-alpha-D-ribose 1-diphosphate: step 3/9. This chain is Histidine biosynthesis bifunctional protein HisIE, found in Photobacterium profundum (strain SS9).